The following is a 376-amino-acid chain: Chaperone protein DnaJ (376 aa).

In terms of domain architecture, J spans 5-70 (DYYEVLGVGR…DKKAAYDQFG (66 aa)). The CR-type zinc finger occupies 132–210 (GLTKELRIPT…CHGEGRVEKS (79 aa)). Residues Cys-145, Cys-148, Cys-162, Cys-165, Cys-184, Cys-187, Cys-198, and Cys-201 each contribute to the Zn(2+) site. CXXCXGXG motif repeat units lie at residues 145–152 (CDLCDGSG), 162–169 (CGTCHGQG), 184–191 (CPTCHGRG), and 198–205 (CGKCHGEG).

This sequence belongs to the DnaJ family. As to quaternary structure, homodimer. It depends on Zn(2+) as a cofactor.

It is found in the cytoplasm. Functionally, participates actively in the response to hyperosmotic and heat shock by preventing the aggregation of stress-denatured proteins and by disaggregating proteins, also in an autonomous, DnaK-independent fashion. Unfolded proteins bind initially to DnaJ; upon interaction with the DnaJ-bound protein, DnaK hydrolyzes its bound ATP, resulting in the formation of a stable complex. GrpE releases ADP from DnaK; ATP binding to DnaK triggers the release of the substrate protein, thus completing the reaction cycle. Several rounds of ATP-dependent interactions between DnaJ, DnaK and GrpE are required for fully efficient folding. Also involved, together with DnaK and GrpE, in the DNA replication of plasmids through activation of initiation proteins. In Shewanella frigidimarina (strain NCIMB 400), this protein is Chaperone protein DnaJ.